The primary structure comprises 149 residues: Lipoprotein signal peptidase (149 aa).

Transmembrane regions (helical) follow at residues 58-78 (WFFI…LIRL) and 85-105 (ASLA…DRAM). Active-site residues include aspartate 111 and aspartate 127. The helical transmembrane segment at 122–142 (IFNVADMAITIGVGILLLDVF) threads the bilayer.

The protein belongs to the peptidase A8 family.

It localises to the cell membrane. The enzyme catalyses Release of signal peptides from bacterial membrane prolipoproteins. Hydrolyzes -Xaa-Yaa-Zaa-|-(S,diacylglyceryl)Cys-, in which Xaa is hydrophobic (preferably Leu), and Yaa (Ala or Ser) and Zaa (Gly or Ala) have small, neutral side chains.. It participates in protein modification; lipoprotein biosynthesis (signal peptide cleavage). This protein specifically catalyzes the removal of signal peptides from prolipoproteins. This chain is Lipoprotein signal peptidase, found in Brevibacillus brevis (strain 47 / JCM 6285 / NBRC 100599).